The chain runs to 281 residues: Phosphoglycerate mutase-like protein AT74H (281 aa).

Catalysis depends on histidine 17, which acts as the Tele-phosphohistidine intermediate. The active-site Proton donor/acceptor is the glutamate 109.

Belongs to the phosphoglycerate mutase family.

May play a role in carbohydrates metabolism. The sequence is that of Phosphoglycerate mutase-like protein AT74H from Arabidopsis thaliana (Mouse-ear cress).